The sequence spans 446 residues: Minor fimbrium tip subunit Mfa3 (446 aa).

Positions 1–20 are cleaved as a signal peptide; that stretch reads MMQLKKRYFALILLLFLWSG. Cys21 is lipidated: N-palmitoyl cysteine. Cys21 carries the S-diacylglycerol cysteine lipid modification. Residues 21–43 constitute a propeptide that is removed on maturation; sequence CDRGVDPQPDPLQPDVYLLVNAR.

Belongs to the bacteroidetes fimbrillin superfamily. FimB/Mfa2 family. Component of the fimbrium tip. Minor fimbriae are composed of a structural subunit, most often Mfa1, and the accessory subunits Mfa3, Mfa4 and Mfa5. Fimbrium assembly occurs by linear, head-to-tail oligomerization of fimbrial subunits. This is mediated via insertion of a C-terminal beta-strand from one subunit into a groove in the N-terminal domain of the following subunit. Mfa3 is required for Mfa4 and Mfa5 insertion into the fimbrium.

It localises to the fimbrium. The protein localises to the cell outer membrane. Its function is as follows. Tip subunit of the minor fimbriae. These filamentous pili are attached to the cell surface; they mediate biofilm formation, adhesion onto host cells and onto other bacteria that are part of the oral microbiome. They play an important role in invasion of periodontal tissues and are recognized as major virulence factors. Fimbrium subunits from different strains have highly divergent sequences, and this correlates with pathogenicity. The chain is Minor fimbrium tip subunit Mfa3 (mfa3) from Porphyromonas gingivalis (strain ATCC 33277 / DSM 20709 / CIP 103683 / JCM 12257 / NCTC 11834 / 2561).